Here is a 306-residue protein sequence, read N- to C-terminus: Serine/threonine-protein phosphatase PP-X homolog 4 (306 aa).

Mn(2+) is bound by residues Asp53, His55, Asp81, and Asn113. The active-site Proton donor is the His114. His163 and His237 together coordinate Mn(2+).

The protein belongs to the PPP phosphatase family. PP-4 (PP-X) subfamily. Mn(2+) is required as a cofactor.

It catalyses the reaction O-phospho-L-seryl-[protein] + H2O = L-seryl-[protein] + phosphate. It carries out the reaction O-phospho-L-threonyl-[protein] + H2O = L-threonyl-[protein] + phosphate. This Paramecium tetraurelia protein is Serine/threonine-protein phosphatase PP-X homolog 4 (Ppx4).